The primary structure comprises 747 residues: MGNRSMGREDTLGVLPSLLFCKMLRFLKRPLVVTIDINLNLVALTVLGLLTRLWQLSYPRAVVFDEVYYGQYISFYMKRVFFLDDSGPPFGHMLLALGGWLGGFDGNFLWNRIGAEYSSNVPVWSLRLLPALAGALSVPMAYQIVLELHFSHCTAMGAALLMLIENALITQSRLMLLESILIFFNLLAVLSYLKFFNSQTHSPFSVHWWLWLMLTGVSCSCAVGIKYMGIFTYLLVLSIAAVHAWHLIGDQTLSNICVLSHLLARAVALLVVPVFLYLLFFYVHLMLLYRSGPHDQIMSSAFQASLEGGLARITQGQPLEVAFGSQVTLKSVSGKPLPCWLHSHKNTYPMIYENGRGSSHQQQVTCYPFKDINNWWIVKDPGRHQLVVNNPPRPVRHGDIVQLVHGMTTRLLNTHDVAAPLSPHSQEVSCYIDYNISMPAQNLWKLDIVNRESNQDTWKTILSEVRFVHVNTSAILKLSGAHLPDWGFRQLEVVGEKLSLGPHESMVWNVEEHRYGRGHEQKERELELHSPTQHDISRNLSFMARFSELQWKMLTLKNEDLEHQYSSTPLEWLTLDTNIAYWLHPRTSAQIHLLGNIVIWTSASLATVAYTLLFFWYLLRRRRNICDLPEDAWSHWVLAGALCIGGWALNYLPFFLMERMLFLYHYLPALTFQILLLPIVMQHASDHLCRSQLQRNVFSALVVAWYSSACHVSNMLRPLTYGDTSLSPGELRALRWKDSWDILIRKY.

The next 7 helical transmembrane spans lie at 30–50 (PLVV…LGLL), 90–110 (FGHM…NFLW), 121–141 (VPVW…VPMA), 176–196 (LLES…LKFF), 205–225 (SVHW…AVGI), 228–248 (MGIF…WHLI), and 267–287 (VALL…HLML). MIR domains follow at residues 318-381 (PLEV…VKDP), 392-449 (PRPV…LDIV), and 453-513 (SNQD…VEEH). N-linked (GlcNAc...) asparagine glycans are attached at residues N435, N471, and N539. 3 helical membrane-spanning segments follow: residues 597–617 (IVIW…FFWY), 636–656 (WVLA…PFFL), and 660–680 (MLFL…LPIV).

It belongs to the glycosyltransferase 39 family.

The protein localises to the endoplasmic reticulum membrane. It catalyses the reaction a di-trans,poly-cis-dolichyl beta-D-mannosyl phosphate + L-seryl-[protein] = 3-O-(alpha-D-mannosyl)-L-seryl-[protein] + a di-trans,poly-cis-dolichyl phosphate + H(+). The enzyme catalyses a di-trans,poly-cis-dolichyl beta-D-mannosyl phosphate + L-threonyl-[protein] = 3-O-(alpha-D-mannosyl)-L-threonyl-[protein] + a di-trans,poly-cis-dolichyl phosphate + H(+). The protein operates within protein modification; protein glycosylation. Transfers mannosyl residues to the hydroxyl group of serine or threonine residues. Coexpression of both POMT1 and POMT2 is necessary for enzyme activity, expression of either POMT1 or POMT2 alone is insufficient. Essentially dedicated to O-mannosylation of alpha-DAG1 and few other proteins but not of cadherins and protocaherins. The polypeptide is Protein O-mannosyl-transferase 1 (Pomt1) (Rattus norvegicus (Rat)).